Reading from the N-terminus, the 557-residue chain is Carbamoyl phosphate synthase large chain, N-terminal section (557 aa).

Residues 1 to 402 (MPKRTDIKKI…ALLKAVRSLE (402 aa)) form a carboxyphosphate synthetic domain region. 12 residues coordinate ATP: R129, R169, G175, G176, K208, L210, E215, G241, V242, H243, Q285, and E299. Positions 133 to 328 (KETMESIGLK…IAKVAAKLAV (196 aa)) constitute an ATP-grasp domain. Mg(2+) is bound by residues Q285, E299, and N301. Mn(2+) is bound by residues Q285, E299, and N301. Positions 403 to 553 (LDRYGLAFPK…PYYTVDGQEI (151 aa)) are oligomerization domain.

Belongs to the CarB family. As to quaternary structure, composed of two chains; the small (or glutamine) chain promotes the hydrolysis of glutamine to ammonia, which is used by the large (or ammonia) chain to synthesize carbamoyl phosphate. Tetramer of heterodimers (alpha,beta)4. Requires Mg(2+) as cofactor. It depends on Mn(2+) as a cofactor.

It catalyses the reaction hydrogencarbonate + L-glutamine + 2 ATP + H2O = carbamoyl phosphate + L-glutamate + 2 ADP + phosphate + 2 H(+). The catalysed reaction is hydrogencarbonate + NH4(+) + 2 ATP = carbamoyl phosphate + 2 ADP + phosphate + 2 H(+). It participates in amino-acid biosynthesis; L-arginine biosynthesis; carbamoyl phosphate from bicarbonate: step 1/1. It functions in the pathway pyrimidine metabolism; UMP biosynthesis via de novo pathway; (S)-dihydroorotate from bicarbonate: step 1/3. Its function is as follows. Large subunit of the glutamine-dependent carbamoyl phosphate synthetase (CPSase). CPSase catalyzes the formation of carbamoyl phosphate from the ammonia moiety of glutamine, carbonate, and phosphate donated by ATP, constituting the first step of 2 biosynthetic pathways, one leading to arginine and/or urea and the other to pyrimidine nucleotides. The large subunit (synthetase) binds the substrates ammonia (free or transferred from glutamine from the small subunit), hydrogencarbonate and ATP and carries out an ATP-coupled ligase reaction, activating hydrogencarbonate by forming carboxy phosphate which reacts with ammonia to form carbamoyl phosphate. The chain is Carbamoyl phosphate synthase large chain, N-terminal section (carB1) from Aquifex aeolicus (strain VF5).